The sequence spans 336 residues: Pyridoxal 5'-phosphate synthase subunit PdxS (336 aa).

Residue Asp62 participates in D-ribose 5-phosphate binding. Lys119 (schiff-base intermediate with D-ribose 5-phosphate) is an active-site residue. A D-ribose 5-phosphate-binding site is contributed by Gly191. Lys203 is a D-glyceraldehyde 3-phosphate binding site. D-ribose 5-phosphate contacts are provided by residues Gly254 and 275 to 276 (GS).

Belongs to the PdxS/SNZ family. In terms of assembly, in the presence of PdxT, forms a dodecamer of heterodimers.

It catalyses the reaction aldehydo-D-ribose 5-phosphate + D-glyceraldehyde 3-phosphate + L-glutamine = pyridoxal 5'-phosphate + L-glutamate + phosphate + 3 H2O + H(+). It functions in the pathway cofactor biosynthesis; pyridoxal 5'-phosphate biosynthesis. Catalyzes the formation of pyridoxal 5'-phosphate from ribose 5-phosphate (RBP), glyceraldehyde 3-phosphate (G3P) and ammonia. The ammonia is provided by the PdxT subunit. Can also use ribulose 5-phosphate and dihydroxyacetone phosphate as substrates, resulting from enzyme-catalyzed isomerization of RBP and G3P, respectively. The protein is Pyridoxal 5'-phosphate synthase subunit PdxS of Pyrobaculum calidifontis (strain DSM 21063 / JCM 11548 / VA1).